The sequence spans 203 residues: NADH dehydrogenase [ubiquinone] 1 alpha subcomplex assembly factor 4 (203 aa).

This sequence belongs to the NDUFAF4 family. As to quaternary structure, together with NdufAF3 associates with mitochondrial complex I assembly intermediates during its biogenesis.

Involved in the assembly of mitochondrial NADH:ubiquinone oxidoreductase complex (complex I). Together with NdufAF3, involved in biogenesis of complex 1 modules N, Q and P-peripheral, but not the P-distal module. Required for recruitment of the complex I assembly factor Timmdc1 to complex 1 assembly intermediates. In Drosophila melanogaster (Fruit fly), this protein is NADH dehydrogenase [ubiquinone] 1 alpha subcomplex assembly factor 4.